The chain runs to 372 residues: O-glycoside alpha-1,2-mannosyltransferase homolog 2 (372 aa).

The Cytoplasmic portion of the chain corresponds to Met1–Leu6. Residues Leu7 to Ile27 form a helical; Signal-anchor for type II membrane protein membrane-spanning segment. At Pro28–Leu372 the chain is on the lumenal side. The Nucleophile role is filled by Glu271.

This sequence belongs to the glycosyltransferase 15 family.

It localises to the endoplasmic reticulum membrane. Functionally, probable mannosyltransferase involved in O-glycosylation of cell wall and secreted proteins. The polypeptide is O-glycoside alpha-1,2-mannosyltransferase homolog 2 (omh2) (Schizosaccharomyces pombe (strain 972 / ATCC 24843) (Fission yeast)).